The following is a 506-amino-acid chain: Lysine--tRNA ligase (506 aa).

Mg(2+)-binding residues include glutamate 416 and glutamate 423.

Belongs to the class-II aminoacyl-tRNA synthetase family. In terms of assembly, homodimer. It depends on Mg(2+) as a cofactor.

The protein resides in the cytoplasm. The enzyme catalyses tRNA(Lys) + L-lysine + ATP = L-lysyl-tRNA(Lys) + AMP + diphosphate. The sequence is that of Lysine--tRNA ligase from Baumannia cicadellinicola subsp. Homalodisca coagulata.